The following is a 597-amino-acid chain: Phosphoinositide phosphatase SAC7 (597 aa).

The SAC domain maps to 130–458 (LSVAEKTTGL…GDEISIQYSG (329 aa)). The short motif at 393–404 (RSNCIDCLDRTN) is the Phosphatase catalytic core element. Helical transmembrane passes span 528 to 548 (AVAN…FATM) and 559 to 579 (HKHL…AALV).

As to expression, ubiquitous.

It is found in the endoplasmic reticulum membrane. The protein localises to the cytoplasmic vesicle membrane. In terms of biological role, phosphoinositide phosphatase that preferentially hydrolyzes PtdIns(4)P. Regulates the accumulation of PtdIns(4)P on membrane compartments at the tips of growing root hairs leading to proper root hair development. This is Phosphoinositide phosphatase SAC7 (SAC7) from Arabidopsis thaliana (Mouse-ear cress).